The sequence spans 341 residues: UDP-3-O-acylglucosamine N-acyltransferase (341 aa).

The Proton acceptor role is filled by H239.

It belongs to the transferase hexapeptide repeat family. LpxD subfamily. In terms of assembly, homotrimer.

It carries out the reaction a UDP-3-O-[(3R)-3-hydroxyacyl]-alpha-D-glucosamine + a (3R)-hydroxyacyl-[ACP] = a UDP-2-N,3-O-bis[(3R)-3-hydroxyacyl]-alpha-D-glucosamine + holo-[ACP] + H(+). It participates in bacterial outer membrane biogenesis; LPS lipid A biosynthesis. Catalyzes the N-acylation of UDP-3-O-acylglucosamine using 3-hydroxyacyl-ACP as the acyl donor. Is involved in the biosynthesis of lipid A, a phosphorylated glycolipid that anchors the lipopolysaccharide to the outer membrane of the cell. This Shewanella sp. (strain MR-4) protein is UDP-3-O-acylglucosamine N-acyltransferase.